Here is a 160-residue protein sequence, read N- to C-terminus: Cytochrome b6-f complex subunit 4 (160 aa).

The next 3 membrane-spanning stretches (helical) occupy residues 36–56, 95–115, and 131–151; these read LLYIFPVVILGTIACNVGLAV, LLGVLLMVSVPVGLLTVPFLE, and TVFLIGTAVALWLGIGATLPI.

The protein belongs to the cytochrome b family. PetD subfamily. As to quaternary structure, the 4 large subunits of the cytochrome b6-f complex are cytochrome b6, subunit IV (17 kDa polypeptide, petD), cytochrome f and the Rieske protein, while the 4 small subunits are petG, petL, petM and petN. The complex functions as a dimer.

It localises to the plastid. The protein localises to the chloroplast thylakoid membrane. Component of the cytochrome b6-f complex, which mediates electron transfer between photosystem II (PSII) and photosystem I (PSI), cyclic electron flow around PSI, and state transitions. The chain is Cytochrome b6-f complex subunit 4 from Daucus carota (Wild carrot).